The primary structure comprises 187 residues: Putative protein SSX8 (187 aa).

Disordered stretches follow at residues 1–21 and 109–187; these read MNGD…SEKR and PKIM…EDDE. Positions 20-83 constitute a KRAB-related domain; that stretch reads KRSKAFNDIA…KQATDFQGNY (64 aa). S123 carries the phosphoserine modification. Basic residues predominate over residues 152–168; sequence KRSGPKRGRHAWTHRLR.

This sequence belongs to the SSX family. Not detected in any normal or tumor tissues.

Could act as a modulator of transcription. The sequence is that of Putative protein SSX8 from Homo sapiens (Human).